The primary structure comprises 181 residues: Putative manganese efflux pump MntP (181 aa).

The next 5 membrane-spanning stretches (helical) occupy residues 35 to 55 (IIFG…GSIA), 59 to 79 (VADW…LLMI), 102 to 122 (AATG…LAFI), 126 to 146 (ILIT…LGVM), and 161 to 181 (ILGG…HLTM).

Belongs to the MntP (TC 9.B.29) family.

The protein localises to the cell inner membrane. Its function is as follows. Probably functions as a manganese efflux pump. In Nitrosomonas eutropha (strain DSM 101675 / C91 / Nm57), this protein is Putative manganese efflux pump MntP.